The sequence spans 425 residues: tRNA(Ile)-lysidine synthase (425 aa).

Residue 27 to 32 coordinates ATP; sequence SGGLDS.

It belongs to the tRNA(Ile)-lysidine synthase family.

The protein localises to the cytoplasm. It carries out the reaction cytidine(34) in tRNA(Ile2) + L-lysine + ATP = lysidine(34) in tRNA(Ile2) + AMP + diphosphate + H(+). In terms of biological role, ligates lysine onto the cytidine present at position 34 of the AUA codon-specific tRNA(Ile) that contains the anticodon CAU, in an ATP-dependent manner. Cytidine is converted to lysidine, thus changing the amino acid specificity of the tRNA from methionine to isoleucine. This Streptococcus pneumoniae serotype 2 (strain D39 / NCTC 7466) protein is tRNA(Ile)-lysidine synthase.